The following is a 98-amino-acid chain: Defensin-like protein 219 (98 aa).

The N-terminal stretch at 1–16 is a signal peptide; the sequence is MKTIFVFLTLAVLVSS. Cystine bridges form between Cys-68-Cys-85, Cys-71-Cys-90, and Cys-75-Cys-92.

Belongs to the DEFL family.

It is found in the secreted. This is Defensin-like protein 219 from Arabidopsis thaliana (Mouse-ear cress).